We begin with the raw amino-acid sequence, 505 residues long: Serine carboxypeptidase-like 47 (505 aa).

Residues 1–22 form the signal peptide; sequence MEAKTFFLFMLFIFSQSWLSTS. N-linked (GlcNAc...) asparagine glycosylation is found at asparagine 37, asparagine 86, and asparagine 122. Cystine bridges form between cysteine 138–cysteine 378, cysteine 306–cysteine 321, and cysteine 344–cysteine 349. The active site involves serine 228. A glycan (N-linked (GlcNAc...) asparagine) is linked at asparagine 301. Aspartate 416 is an active-site residue. Asparagine 432 and asparagine 444 each carry an N-linked (GlcNAc...) asparagine glycan. The active site involves histidine 473.

This sequence belongs to the peptidase S10 family. Expressed in roots, flowers and siliques.

Its subcellular location is the secreted. Its function is as follows. Probable carboxypeptidase. The sequence is that of Serine carboxypeptidase-like 47 (SCPL47) from Arabidopsis thaliana (Mouse-ear cress).